We begin with the raw amino-acid sequence, 205 residues long: GTP cyclohydrolase-2 (205 aa).

Residue 49 to 53 (RLHSE) coordinates GTP. The Zn(2+) site is built by Cys54, Cys65, and Cys67. Residues Gln70, 92-94 (EGR), and Thr114 contribute to the GTP site. Asp126 (proton acceptor) is an active-site residue. Arg128 acts as the Nucleophile in catalysis. 2 residues coordinate GTP: Thr149 and Lys154.

It belongs to the GTP cyclohydrolase II family. Zn(2+) serves as cofactor.

The catalysed reaction is GTP + 4 H2O = 2,5-diamino-6-hydroxy-4-(5-phosphoribosylamino)-pyrimidine + formate + 2 phosphate + 3 H(+). It participates in cofactor biosynthesis; riboflavin biosynthesis; 5-amino-6-(D-ribitylamino)uracil from GTP: step 1/4. Its function is as follows. Catalyzes the conversion of GTP to 2,5-diamino-6-ribosylamino-4(3H)-pyrimidinone 5'-phosphate (DARP), formate and pyrophosphate. This is GTP cyclohydrolase-2 from Pseudomonas aeruginosa (strain LESB58).